The chain runs to 1186 residues: Sericin 1 (1186 aa).

A signal peptide spans 1–21 (MRFVLCCTLIALAALSVKAFG). 2 stretches are compositionally biased toward polar residues: residues 39–48 (AASSESSYLN) and 104–115 (NGGSASAGQSRD). Disordered stretches follow at residues 39–119 (AASS…SSLR), 131–494 (AVAA…EDSS), and 518–1157 (GGAT…VNRL). Over residues 145-155 (AQQNAQANWNA) the composition is skewed to low complexity. Residues 180–198 (SDKDITAASKDDSRADSSR) are compositionally biased toward basic and acidic residues. The segment covering 211–224 (SESAGLSDRSASSS) has biased composition (low complexity). Polar residues predominate over residues 256-275 (YYNSSPDGSYNAGTRDSSIS). The span at 286 to 299 (ADKDQIRAANDRSS) shows a compositional bias: basic and acidic residues. Positions 300–312 (SKQLKQSSAQISS) are enriched in low complexity. A compositionally biased stretch (basic and acidic residues) spans 321–334 (SKDRQYSNDKRSKS). Polar residues-rich tracts occupy residues 356 to 380 (RQSN…QTSK), 393 to 409 (AHSS…SSSY), and 416 to 445 (FSSS…ASRE). Composition is skewed to low complexity over residues 465-491 (ASQS…TLSE), 518-537 (GGAT…VSGA), 553-698 (SSSS…YGYS), 705-1004 (RVSS…YSSS), 1015-1075 (SSSN…ASSE), and 1097-1145 (SSTT…TSSS). Repeat copies occupy residues 593–630 (SSTG…GGSV), 631–668 (SSTG…GGSV), 669–706 (SSTG…GGRV), 707–744 (SSTG…DGSV), 745–782 (SSTG…DGSV), 783–820 (SSTG…DGSV), 821–858 (SSTG…DGSV), 859–896 (SSTG…DGSV), 897–934 (SSTG…DGSV), 935–972 (SSTG…DGSV), and 973–1010 (SSTG…DGSV). The segment covering 1148–1157 (RSHHSGVNRL) has biased composition (basic residues).

Produced exclusively in the middle (MSG) section of silk glands.

The protein resides in the secreted. Functionally, provides the silk fibroin thread with a sticky coating. Acts as a cement by sticking silk threads together. This chain is Sericin 1 (ser1), found in Bombyx mori (Silk moth).